A 123-amino-acid polypeptide reads, in one-letter code: MAPKAPGKGAKKAAKSKAPRAPGDRKRKRTRRESYSIYIYKVMKQVHPDTGISSRAMSIMNSFVNDIFERIAAEASRLAHYNRKSTITSREVQTAVRLLLPGELAKHAVSEGTKAVTKYTTSK.

Positions 1 to 32 (MAPKAPGKGAKKAAKSKAPRAPGDRKRKRTRR) are disordered. Residues 9 to 18 (GAKKAAKSKA) are compositionally biased toward basic residues. An O-linked (GlcNAc) serine glycan is attached at Ser110. A Glycyl lysine isopeptide (Lys-Gly) (interchain with G-Cter in ubiquitin) cross-link involves residue Lys118.

The protein belongs to the histone H2B family. The nucleosome is a histone octamer containing two molecules each of H2A, H2B, H3 and H4 assembled in one H3-H4 heterotetramer and two H2A-H2B heterodimers. The octamer wraps approximately 147 bp of DNA. Post-translationally, monoubiquitination of Lys-118 gives a specific tag for epigenetic transcriptional activation and is also prerequisite for histone H3 'Lys-4' and 'Lys-79' methylation. In terms of processing, glcNAcylation at Ser-110 promotes monoubiquitination of Lys-118. It fluctuates in response to extracellular glucose, and associates with transcribed genes.

It localises to the nucleus. The protein localises to the chromosome. Functionally, core component of nucleosome. Nucleosomes wrap and compact DNA into chromatin, limiting DNA accessibility to the cellular machineries which require DNA as a template. Histones thereby play a central role in transcription regulation, DNA repair, DNA replication and chromosomal stability. DNA accessibility is regulated via a complex set of post-translational modifications of histones, also called histone code, and nucleosome remodeling. In Holothuria tubulosa (Tubular sea cucumber), this protein is Histone H2B.